Consider the following 197-residue polypeptide: Translation initiation factor IF-3 (197 aa).

Belongs to the IF-3 family. Monomer.

The protein resides in the cytoplasm. IF-3 binds to the 30S ribosomal subunit and shifts the equilibrium between 70S ribosomes and their 50S and 30S subunits in favor of the free subunits, thus enhancing the availability of 30S subunits on which protein synthesis initiation begins. The sequence is that of Translation initiation factor IF-3 from Prosthecochloris aestuarii (strain DSM 271 / SK 413).